The chain runs to 188 residues: UPF0232 protein RHA1_ro03670 (188 aa).

Disordered stretches follow at residues 1–20, 31–78, and 166–188; these read MTDDLEPTAPAAAAPEPEVK, EARA…QPFG, and PTAPSWRKGERHIRGRGPRDTYG. Residues 7 to 16 show a composition bias toward low complexity; it reads PTAPAAAAPE.

The protein belongs to the UPF0232 family.

The sequence is that of UPF0232 protein RHA1_ro03670 from Rhodococcus jostii (strain RHA1).